The sequence spans 122 residues: Lysozyme (122 aa).

The region spanning 3-118 (GGIVSQRCLS…WNRLQKISGC (116 aa)) is the I-type lysozyme domain. 7 disulfides stabilise this stretch: Cys10-Cys86, Cys13-Cys118, Cys15-Cys21, Cys26-Cys35, Cys48-Cys68, Cys58-Cys64, and Cys82-Cys100. Catalysis depends on Glu18, which acts as the Proton donor. Asp29 serves as the catalytic Nucleophile. 41-47 (KEAYWID) serves as a coordination point for substrate. Substrate-binding positions include Tyr72, His93, 93 to 95 (HNG), and Lys102.

This sequence belongs to the glycosyl hydrolase 22 family. Type-I lysozyme subfamily. In terms of assembly, monomer.

It is found in the secreted. It catalyses the reaction Hydrolysis of (1-&gt;4)-beta-linkages between N-acetylmuramic acid and N-acetyl-D-glucosamine residues in a peptidoglycan and between N-acetyl-D-glucosamine residues in chitodextrins.. In terms of biological role, has bacteriolytic activity against Gram-positive bacteria M.luteus. Also has chitinase activity. This chain is Lysozyme, found in Meretrix lusoria (Hard clam).